The following is a 497-amino-acid chain: Subtilisin-like protease CPC735_031240 (497 aa).

A signal peptide spans 1–16 (MKGVLSLSLLPLLAAP). A propeptide spanning residues 17-136 (SPILVDTIHR…IEKDSEVHAW (120 aa)) is cleaved from the precursor. Positions 43-134 (SYIVVFKKNV…QYIEKDSEVH (92 aa)) constitute an Inhibitor I9 domain. The region spanning 146 to 452 (PWGLARVSHR…GGSSNYTAII (307 aa)) is the Peptidase S8 domain. Residues D182 and H214 each act as charge relay system in the active site. N-linked (GlcNAc...) asparagine glycans are attached at residues N244 and N284. Catalysis depends on S380, which acts as the Charge relay system. N-linked (GlcNAc...) asparagine glycosylation is present at N447.

It belongs to the peptidase S8 family.

It localises to the secreted. Secreted subtilisin-like serine protease with keratinolytic activity that contributes to pathogenicity. This chain is Subtilisin-like protease CPC735_031240, found in Coccidioides posadasii (strain C735) (Valley fever fungus).